Reading from the N-terminus, the 338-residue chain is Probable 1-aminocyclopropane-1-carboxylate deaminase (338 aa).

N6-(pyridoxal phosphate)lysine is present on K51. The active-site Nucleophile is S78.

This sequence belongs to the ACC deaminase/D-cysteine desulfhydrase family. Pyridoxal 5'-phosphate serves as cofactor.

It carries out the reaction 1-aminocyclopropane-1-carboxylate + H2O = 2-oxobutanoate + NH4(+). Functionally, catalyzes a cyclopropane ring-opening reaction, the irreversible conversion of 1-aminocyclopropane-1-carboxylate (ACC) to ammonia and alpha-ketobutyrate. This Schizosaccharomyces pombe (strain 972 / ATCC 24843) (Fission yeast) protein is Probable 1-aminocyclopropane-1-carboxylate deaminase.